The following is a 459-amino-acid chain: Light-independent protochlorophyllide reductase subunit N (459 aa).

The [4Fe-4S] cluster site is built by cysteine 22, cysteine 47, and cysteine 107.

This sequence belongs to the BchN/ChlN family. Protochlorophyllide reductase is composed of three subunits; ChlL, ChlN and ChlB. Forms a heterotetramer of two ChlB and two ChlN subunits. [4Fe-4S] cluster serves as cofactor.

It localises to the plastid. The protein localises to the chloroplast. It carries out the reaction chlorophyllide a + oxidized 2[4Fe-4S]-[ferredoxin] + 2 ADP + 2 phosphate = protochlorophyllide a + reduced 2[4Fe-4S]-[ferredoxin] + 2 ATP + 2 H2O. Its pathway is porphyrin-containing compound metabolism; chlorophyll biosynthesis (light-independent). Its function is as follows. Component of the dark-operative protochlorophyllide reductase (DPOR) that uses Mg-ATP and reduced ferredoxin to reduce ring D of protochlorophyllide (Pchlide) to form chlorophyllide a (Chlide). This reaction is light-independent. The NB-protein (ChlN-ChlB) is the catalytic component of the complex. The polypeptide is Light-independent protochlorophyllide reductase subunit N (Pinus contorta (Shore pine)).